We begin with the raw amino-acid sequence, 473 residues long: Glutamate--tRNA ligase 2 (473 aa).

The short motif at 11–21 (PSPTGYLHIGG) is the 'HIGH' region element. The span at 113–133 (KARAEGRPPRYDGRWRDRDPS) shows a compositional bias: basic and acidic residues. The tract at residues 113–136 (KARAEGRPPRYDGRWRDRDPSEAP) is disordered. The 'KMSKS' region signature appears at 240–244 (KLSKR). Residue K243 coordinates ATP.

It belongs to the class-I aminoacyl-tRNA synthetase family. Glutamate--tRNA ligase type 1 subfamily. In terms of assembly, monomer.

The protein localises to the cytoplasm. The catalysed reaction is tRNA(Glu) + L-glutamate + ATP = L-glutamyl-tRNA(Glu) + AMP + diphosphate. Catalyzes the attachment of glutamate to tRNA(Glu) in a two-step reaction: glutamate is first activated by ATP to form Glu-AMP and then transferred to the acceptor end of tRNA(Glu). The chain is Glutamate--tRNA ligase 2 from Brucella suis biovar 1 (strain 1330).